The sequence spans 336 residues: tRNA-splicing endonuclease (336 aa).

Catalysis depends on residues Tyr-271, His-282, and Lys-313.

This sequence belongs to the tRNA-intron endonuclease family. Archaeal long subfamily. As to quaternary structure, homodimer.

The catalysed reaction is pretRNA = a 3'-half-tRNA molecule with a 5'-OH end + a 5'-half-tRNA molecule with a 2',3'-cyclic phosphate end + an intron with a 2',3'-cyclic phosphate and a 5'-hydroxyl terminus.. In terms of biological role, endonuclease that removes tRNA introns. Cleaves pre-tRNA at the 5'- and 3'-splice sites to release the intron. The products are an intron and two tRNA half-molecules bearing 2',3' cyclic phosphate and 5'-OH termini. Recognizes a pseudosymmetric substrate in which 2 bulged loops of 3 bases are separated by a stem of 4 bp. This chain is tRNA-splicing endonuclease, found in Natronomonas pharaonis (strain ATCC 35678 / DSM 2160 / CIP 103997 / JCM 8858 / NBRC 14720 / NCIMB 2260 / Gabara) (Halobacterium pharaonis).